The chain runs to 201 residues: Protein CD300H (201 aa).

The signal sequence occupies residues 1–24 (MTQRAGAAMLPSALLLLCVPGCLT). An Ig-like V-type domain is found at 25–123 (VSGPSTVMGA…ATILQEDGLS (99 aa)). Topologically, residues 25–168 (VSGPSTVMGA…CQGSLPSSTC (144 aa)) are extracellular. Cys-43 and Cys-111 are joined by a disulfide. Asn-100 is a glycosylation site (N-linked (GlcNAc...) asparagine). The helical transmembrane segment at 169 to 189 (FLLLPLLKVPLLLSILGAILW) threads the bilayer. Topologically, residues 190 to 201 (VNRPWRTPWTES) are cytoplasmic.

The protein belongs to the CD300 family. Interacts with TYROBP and HCST. As to expression, expressed on CD16+ monocytes and myeloid dendritic cells (at protein level). By contrast, not detected in lymphocytes nor granulocytes (at protein level).

The protein localises to the membrane. Its subcellular location is the secreted. In terms of biological role, may play an important role in innate immunity by mediating a signal for the production of a neutrophil chemoattractant. The chain is Protein CD300H from Homo sapiens (Human).